Consider the following 79-residue polypeptide: Small ribosomal subunit protein bS16 (79 aa).

This sequence belongs to the bacterial ribosomal protein bS16 family.

This chain is Small ribosomal subunit protein bS16, found in Hahella chejuensis (strain KCTC 2396).